The chain runs to 179 residues: ATP synthase subunit delta (179 aa).

The protein belongs to the ATPase delta chain family. As to quaternary structure, F-type ATPases have 2 components, F(1) - the catalytic core - and F(0) - the membrane proton channel. F(1) has five subunits: alpha(3), beta(3), gamma(1), delta(1), epsilon(1). F(0) has three main subunits: a(1), b(2) and c(10-14). The alpha and beta chains form an alternating ring which encloses part of the gamma chain. F(1) is attached to F(0) by a central stalk formed by the gamma and epsilon chains, while a peripheral stalk is formed by the delta and b chains.

It localises to the cell inner membrane. Functionally, f(1)F(0) ATP synthase produces ATP from ADP in the presence of a proton or sodium gradient. F-type ATPases consist of two structural domains, F(1) containing the extramembraneous catalytic core and F(0) containing the membrane proton channel, linked together by a central stalk and a peripheral stalk. During catalysis, ATP synthesis in the catalytic domain of F(1) is coupled via a rotary mechanism of the central stalk subunits to proton translocation. This protein is part of the stalk that links CF(0) to CF(1). It either transmits conformational changes from CF(0) to CF(1) or is implicated in proton conduction. The sequence is that of ATP synthase subunit delta from Burkholderia mallei (strain NCTC 10247).